A 373-amino-acid chain; its full sequence is UBX domain-containing protein 1 (373 aa).

Disordered stretches follow at residues 39–179 (VTEF…QIPR) and 236–293 (IKQH…VDES). Over residues 49–59 (TAGSSEPTGQP) the composition is skewed to polar residues. Low complexity-rich tracts occupy residues 60–71 (SAKSSSSTPRES) and 85–94 (LGDLASGAAD). Residues 95 to 104 (SSDDDDDENQ) show a composition bias toward acidic residues. The segment covering 121-132 (DDLKKKIIEKAR) has biased composition (basic and acidic residues). Residues 185–258 (LHFWADGFSV…KYQPFAGKGQ (74 aa)) enclose the SEP domain. Residues 292 to 369 (ESQPVVTLQI…PEFKRGGVVV (78 aa)) enclose the UBX domain.

Functionally, involved in CDC48-dependent protein degradation through the ubiquitin/proteasome pathway. This is UBX domain-containing protein 1 (ubx1) from Emericella nidulans (strain FGSC A4 / ATCC 38163 / CBS 112.46 / NRRL 194 / M139) (Aspergillus nidulans).